A 418-amino-acid polypeptide reads, in one-letter code: Tyrosine--tRNA ligase (418 aa).

Tyrosine 38 lines the L-tyrosine pocket. A 'HIGH' region motif is present at residues 43 to 52 (CTARSLHIGS). Positions 175 and 179 each coordinate L-tyrosine. The 'KMSKS' region motif lies at 235–239 (KMGKT). Lysine 238 is a binding site for ATP. The 66-residue stretch at 348-413 (LSVVKLLQVS…CGKKRHLKVV (66 aa)) folds into the S4 RNA-binding domain.

This sequence belongs to the class-I aminoacyl-tRNA synthetase family. TyrS type 1 subfamily. In terms of assembly, homodimer.

The protein resides in the cytoplasm. The enzyme catalyses tRNA(Tyr) + L-tyrosine + ATP = L-tyrosyl-tRNA(Tyr) + AMP + diphosphate + H(+). Its function is as follows. Catalyzes the attachment of tyrosine to tRNA(Tyr) in a two-step reaction: tyrosine is first activated by ATP to form Tyr-AMP and then transferred to the acceptor end of tRNA(Tyr). The chain is Tyrosine--tRNA ligase from Ehrlichia ruminantium (strain Gardel).